We begin with the raw amino-acid sequence, 486 residues long: Keratin-3, type I cytoskeletal 51 kDa (486 aa).

Positions 1–125 (MSNYSIKQSA…AGGMDIFSTN (125 aa)) are head. Positions 126–161 (EKQTMQNLNDRLASYLDKVHALETANTELERKIKEW) are coil 1A. The region spanning 126–442 (EKQTMQNLND…RLLDGDLSKP (317 aa)) is the IF rod domain. The linker 1 stretch occupies residues 162 to 184 (YEKQRPGSSSGDGAKDYSKYYTM). Positions 185–276 (INDLKNQIIA…KNHEDELKGM (92 aa)) are coil 1B. Positions 277–299 (QVTQVGQVNVEMNAAPSSDLTKI) are linker 12. Positions 300 to 438 (LNDMRSQYED…ETYRRLLDGD (139 aa)) are coil 2. Positions 435–466 (LDGDLSKPKSGGGTSTNTGSTSSKGSTRTVKR) are disordered. The tail stretch occupies residues 439 to 486 (LSKPKSGGGTSTNTGSTSSKGSTRTVKRREIIEEVVDGKVVSTKVVDM). A compositionally biased stretch (low complexity) spans 449–461 (STNTGSTSSKGST).

Belongs to the intermediate filament family. Heterotetramer of two type I and two type II keratins.

This is Keratin-3, type I cytoskeletal 51 kDa from Xenopus laevis (African clawed frog).